A 323-amino-acid polypeptide reads, in one-letter code: Aquaporin-4 (323 aa).

Over 1-36 the chain is Cytoplasmic; sequence MSDGAAARRWGKCGHSCSRESIMVAFKGVWTQAFWK. Residues Cys-13 and Cys-17 are each lipidated (S-palmitoyl cysteine). The chain crosses the membrane as a helical span at residues 37–57; that stretch reads AVSAEFLATLIFVLLGVGSTI. The Extracellular portion of the chain corresponds to 58-69; that stretch reads NWGGSENPLPVD. A helical transmembrane segment spans residues 70–89; it reads MVLISLCFGLSIATMVQCFG. The Cytoplasmic segment spans residues 90 to 93; the sequence is HISG. An intramembrane region (discontinuously helical) is located at residues 94–101; sequence GHINPAVT. The short motif at 97–99 is the NPA 1 element; it reads NPA. Residues 102 to 115 are Cytoplasmic-facing; the sequence is VAMVCTRKISIAKS. Ser-111 bears the Phosphoserine; by PKG mark. The helical transmembrane segment at 116–136 threads the bilayer; sequence VFYIIAQCLGAIIGAGILYLV. The Extracellular portion of the chain corresponds to 137–155; sequence TPPSVVGGLGVTTVHGNLT. A glycan (N-linked (GlcNAc...) asparagine) is linked at Asn-153. The helical transmembrane segment at 156 to 176 threads the bilayer; the sequence is AGHGLLVELIITFQLVFTIFA. Residues 177–184 lie on the Cytoplasmic side of the membrane; that stretch reads SCDSKRTD. Ser-180 is modified (phosphoserine; by PKC). Residues 185-205 form a helical membrane-spanning segment; the sequence is VTGSIALAIGFSVAIGHLFAI. N-linked (GlcNAc...) asparagine glycosylation occurs at Asn-206. Topologically, residues 206–208 are extracellular; that stretch reads NYT. An intramembrane region (discontinuously helical) is located at residues 209-222; it reads GASMNPARSFGPAV. The NPA 2 signature appears at 213-215; the sequence is NPA. The Extracellular segment spans residues 223-231; it reads IMGNWANHW. The helical transmembrane segment at 232–252 threads the bilayer; that stretch reads IYWVGPIMGAVLAGALYEYVF. Residues 253–323 lie on the Cytoplasmic side of the membrane; the sequence is CPDVELKRRL…DSSGEVLSSV (71 aa). Ser-276 and Ser-285 each carry phosphoserine. Thr-289 is modified (phosphothreonine). Residue Ser-321 is modified to Phosphoserine.

This sequence belongs to the MIP/aquaporin (TC 1.A.8) family. Homotetramer. The tetramers can form oligomeric arrays in membranes. The size of the oligomers differs between tissues and is smaller in skeletal muscle than in brain. Interaction between AQP4 oligomeric arrays in close-by cells can contribute to cell-cell adhesion. Part of a complex containing MLC1, TRPV4, HEPACAM and ATP1B1. Post-translationally, phosphorylation by PKC at Ser-180 reduces conductance by 50%. Phosphorylation by PKG at Ser-111 in response to glutamate increases conductance by 40%; this increase is not due to increased presence at the cell membrane. In terms of processing, isoform 2: Palmitoylated on its N-terminal region. Isoform 1: Not palmitoylated. In terms of tissue distribution, detected in brain cortex, especially around cortical blood vessels, and subjacent to pia, with lower levels in parenchymal membranes. Detected in ependymal and astroglial cells in brain. Detected in supporting Hensen's cells, inner sulcus cells and Claudius cells in the inner ear. Detected in skeletal muscle. Detected in gastric parietal cells. Detected in principal cells in collecting ducts in kidney medulla (at protein level). Detected in brain, heart and skeletal muscle.

Its subcellular location is the cell membrane. It is found in the basolateral cell membrane. The protein resides in the endosome membrane. The protein localises to the sarcolemma. It localises to the cell projection. The enzyme catalyses H2O(in) = H2O(out). Functionally, forms a water-specific channel. Plays an important role in brain water homeostasis and in glymphatic solute transport. Required for a normal rate of water exchange across the blood brain interface. Required for normal levels of cerebrospinal fluid influx into the brain cortex and parenchyma along paravascular spaces that surround penetrating arteries, and for normal drainage of interstitial fluid along paravenous drainage pathways. Thereby, it is required for normal clearance of solutes from the brain interstitial fluid, including soluble beta-amyloid peptides derived from APP. Plays a redundant role in urinary water homeostasis and urinary concentrating ability. In Mus musculus (Mouse), this protein is Aquaporin-4 (Aqp4).